The following is a 32-amino-acid chain: Photosystem II reaction center protein T (32 aa).

Residues 3–23 (ALVYTFLLIGTLIVIFFAVFF) traverse the membrane as a helical segment.

This sequence belongs to the PsbT family. In terms of assembly, PSII is composed of 1 copy each of membrane proteins PsbA, PsbB, PsbC, PsbD, PsbE, PsbF, PsbH, PsbI, PsbJ, PsbK, PsbL, PsbM, PsbT, PsbX, PsbY, PsbZ, Psb30/Ycf12, at least 3 peripheral proteins of the oxygen-evolving complex and a large number of cofactors. It forms dimeric complexes.

The protein resides in the plastid. The protein localises to the chloroplast thylakoid membrane. Its function is as follows. Found at the monomer-monomer interface of the photosystem II (PS II) dimer, plays a role in assembly and dimerization of PSII. PSII is a light-driven water plastoquinone oxidoreductase, using light energy to abstract electrons from H(2)O, generating a proton gradient subsequently used for ATP formation. In Phaeodactylum tricornutum (strain CCAP 1055/1), this protein is Photosystem II reaction center protein T.